The primary structure comprises 65 residues: U11-theraphotoxin-Cg1a (65 aa).

A signal peptide spans 1–21 (MKTTILLVILGLTLLFALSAA). Residues 22–29 (TELKDEER) constitute a propeptide that is removed on maturation. 3 cysteine pairs are disulfide-bonded: Cys-31–Cys-45, Cys-38–Cys-50, and Cys-44–Cys-57.

The protein belongs to the neurotoxin 10 (Hwtx-1) family. 32 (Jztx-16) subfamily. Expressed by the venom gland.

It is found in the secreted. In terms of biological role, probable ion channel inhibitor. This is U11-theraphotoxin-Cg1a from Chilobrachys guangxiensis (Chinese earth tiger tarantula).